The following is a 352-amino-acid chain: Holliday junction branch migration complex subunit RuvB (352 aa).

The interval 13-201 (IPRSRKELRL…FGLCHKIEFY (189 aa)) is large ATPase domain (RuvB-L). Residues Leu37, Arg41, Gly82, Lys85, Thr86, Thr87, 148–150 (EDF), Arg191, Tyr201, and Arg238 each bind ATP. Thr86 is a binding site for Mg(2+). The small ATPAse domain (RuvB-S) stretch occupies residues 202 to 273 (SNDELKQIIF…IIEKALDSQK (72 aa)). Positions 276–352 (NRGLDNVDRK…KYISSNNEKY (77 aa)) are head domain (RuvB-H). Residues Arg330 and Arg335 each contribute to the DNA site.

Belongs to the RuvB family. Homohexamer. Forms an RuvA(8)-RuvB(12)-Holliday junction (HJ) complex. HJ DNA is sandwiched between 2 RuvA tetramers; dsDNA enters through RuvA and exits via RuvB. An RuvB hexamer assembles on each DNA strand where it exits the tetramer. Each RuvB hexamer is contacted by two RuvA subunits (via domain III) on 2 adjacent RuvB subunits; this complex drives branch migration. In the full resolvosome a probable DNA-RuvA(4)-RuvB(12)-RuvC(2) complex forms which resolves the HJ.

The protein localises to the cytoplasm. It catalyses the reaction ATP + H2O = ADP + phosphate + H(+). Its function is as follows. The RuvA-RuvB-RuvC complex processes Holliday junction (HJ) DNA during genetic recombination and DNA repair, while the RuvA-RuvB complex plays an important role in the rescue of blocked DNA replication forks via replication fork reversal (RFR). RuvA specifically binds to HJ cruciform DNA, conferring on it an open structure. The RuvB hexamer acts as an ATP-dependent pump, pulling dsDNA into and through the RuvAB complex. RuvB forms 2 homohexamers on either side of HJ DNA bound by 1 or 2 RuvA tetramers; 4 subunits per hexamer contact DNA at a time. Coordinated motions by a converter formed by DNA-disengaged RuvB subunits stimulates ATP hydrolysis and nucleotide exchange. Immobilization of the converter enables RuvB to convert the ATP-contained energy into a lever motion, pulling 2 nucleotides of DNA out of the RuvA tetramer per ATP hydrolyzed, thus driving DNA branch migration. The RuvB motors rotate together with the DNA substrate, which together with the progressing nucleotide cycle form the mechanistic basis for DNA recombination by continuous HJ branch migration. Branch migration allows RuvC to scan DNA until it finds its consensus sequence, where it cleaves and resolves cruciform DNA. This chain is Holliday junction branch migration complex subunit RuvB, found in Prochlorococcus marinus (strain MIT 9515).